We begin with the raw amino-acid sequence, 301 residues long: Glycine--tRNA ligase alpha subunit (301 aa).

This sequence belongs to the class-II aminoacyl-tRNA synthetase family. As to quaternary structure, tetramer of two alpha and two beta subunits.

The protein localises to the cytoplasm. It catalyses the reaction tRNA(Gly) + glycine + ATP = glycyl-tRNA(Gly) + AMP + diphosphate. In Variovorax paradoxus (strain S110), this protein is Glycine--tRNA ligase alpha subunit.